The chain runs to 248 residues: PF03932 family protein CutC (248 aa).

It belongs to the CutC family. Homodimer.

The protein localises to the cytoplasm. This is PF03932 family protein CutC from Escherichia coli O9:H4 (strain HS).